Reading from the N-terminus, the 1072-residue chain is DNA-directed RNA polymerase subunit beta (1072 aa).

It belongs to the RNA polymerase beta chain family. In plastids the minimal PEP RNA polymerase catalytic core is composed of four subunits: alpha, beta, beta', and beta''. When a (nuclear-encoded) sigma factor is associated with the core the holoenzyme is formed, which can initiate transcription.

The protein resides in the plastid. The protein localises to the chloroplast. The catalysed reaction is RNA(n) + a ribonucleoside 5'-triphosphate = RNA(n+1) + diphosphate. In terms of biological role, DNA-dependent RNA polymerase catalyzes the transcription of DNA into RNA using the four ribonucleoside triphosphates as substrates. This chain is DNA-directed RNA polymerase subunit beta, found in Eucalyptus globulus subsp. globulus (Tasmanian blue gum).